The sequence spans 292 residues: uncharacterized protein (292 aa).

A helical transmembrane segment spans residues 66 to 86 (LFFYLLFWWTYLTIVVLLTVP).

Its subcellular location is the host membrane. This is an uncharacterized protein from Alcelaphine herpesvirus 1 (strain C500) (AlHV-1).